Here is a 138-residue protein sequence, read N- to C-terminus: Small ribosomal subunit protein uS11c (138 aa).

This sequence belongs to the universal ribosomal protein uS11 family. In terms of assembly, part of the 30S ribosomal subunit.

It localises to the plastid. The protein resides in the chloroplast. The sequence is that of Small ribosomal subunit protein uS11c from Illicium oligandrum (Star anise).